We begin with the raw amino-acid sequence, 201 residues long: MEKFTTLEGVAAPLKIVNVDTDMIIPKQYLKTIKRTGLGTGLFSEMRYKEDGSDNPDFVLNQPAYRNAKIIVAGDNFGCGSSREHAPWALLDFGIRCVISTSFADIFYNNCFKNGILPIVVSKDDLDKLFDDADRGANATLTIDLAAQEIRGPDGGTVKFEIDPFRKRCLLEGLDDIGLTLEKGTQIDTYEGEKKTEQPWL.

This sequence belongs to the LeuD family. LeuD type 1 subfamily. Heterodimer of LeuC and LeuD.

It catalyses the reaction (2R,3S)-3-isopropylmalate = (2S)-2-isopropylmalate. It functions in the pathway amino-acid biosynthesis; L-leucine biosynthesis; L-leucine from 3-methyl-2-oxobutanoate: step 2/4. Its function is as follows. Catalyzes the isomerization between 2-isopropylmalate and 3-isopropylmalate, via the formation of 2-isopropylmaleate. The chain is 3-isopropylmalate dehydratase small subunit from Azorhizobium caulinodans (strain ATCC 43989 / DSM 5975 / JCM 20966 / LMG 6465 / NBRC 14845 / NCIMB 13405 / ORS 571).